Here is a 257-residue protein sequence, read N- to C-terminus: uncharacterized protein (257 aa).

The N-terminal stretch at 1-22 (MGYLKRFALYISVMILMFAIAG) is a signal peptide. Cysteine 23 carries the N-palmitoyl cysteine lipid modification. Cysteine 23 is lipidated: S-diacylglycerol cysteine.

Belongs to the staphylococcal tandem lipoprotein family.

It is found in the cell membrane. This is an uncharacterized protein from Staphylococcus aureus (strain MRSA252).